A 211-amino-acid chain; its full sequence is Troponin I, cardiac muscle (211 aa).

A disordered region spans residues Met1–Ser23. Ala2 is subject to N-acetylalanine. At Ser5 the chain carries Phosphoserine. Residues Ser23 and Ser24 each carry the phosphoserine; by PKA and PKD/PRKD1 modification. Tyr27 bears the Phosphotyrosine mark. Thr32 carries the phosphothreonine; by STK4/MST1 modification. Residues Glu33–Arg80 are involved in binding TNC. 2 positions are modified to phosphoserine; by PKC/PRKCE: Ser43 and Ser45. At Thr52 the chain carries Phosphothreonine; by STK4/MST1. Residue Ser78 is modified to Phosphoserine. Phosphothreonine is present on Thr79. A phosphothreonine; by STK4/MST1 mark is found at Thr130 and Thr144. Residues Thr130–Ile150 form an involved in binding TNC and actin region. At Ser151 the chain carries Phosphoserine; by PAK3. The residue at position 167 (Ser167) is a Phosphoserine. Thr182 bears the Phosphothreonine mark. Residue Ser200 is modified to Phosphoserine.

It belongs to the troponin I family. As to quaternary structure, binds to actin and tropomyosin. Interacts with TRIM63. Interacts with STK4/MST1. Post-translationally, phosphorylated at Ser-23 and Ser-24 by PRKD1; phosphorylation reduces myofilament calcium sensitivity. Phosphorylated preferentially at Thr-32. Phosphorylation by STK4/MST1 alters its binding affinity to TNNC1 (cardiac Tn-C) and TNNT2 (cardiac Tn-T). Phosphorylated at Ser-43 and Ser-45 by PRKCE; phosphorylation increases myocardium contractile dysfunction.

In terms of biological role, troponin I is the inhibitory subunit of troponin, the thin filament regulatory complex which confers calcium-sensitivity to striated muscle actomyosin ATPase activity. The polypeptide is Troponin I, cardiac muscle (TNNI3) (Canis lupus familiaris (Dog)).